The sequence spans 122 residues: Large ribosomal subunit protein uL18 (122 aa).

Residues 1 to 25 (MSTLSRKQQTQKRHRRLRRHLSGTA) are disordered. A compositionally biased stretch (basic residues) spans 9 to 21 (QTQKRHRRLRRHL).

Belongs to the universal ribosomal protein uL18 family. As to quaternary structure, part of the 50S ribosomal subunit; part of the 5S rRNA/L5/L18/L25 subcomplex. Contacts the 5S and 23S rRNAs.

This is one of the proteins that bind and probably mediate the attachment of the 5S RNA into the large ribosomal subunit, where it forms part of the central protuberance. The chain is Large ribosomal subunit protein uL18 from Synechococcus sp. (strain CC9311).